A 128-amino-acid polypeptide reads, in one-letter code: Aspartate 1-decarboxylase (128 aa).

Catalysis depends on S25, which acts as the Schiff-base intermediate with substrate; via pyruvic acid. S25 is subject to Pyruvic acid (Ser). Residue T57 participates in substrate binding. The active-site Proton donor is Y58. A substrate-binding site is contributed by 73–75; sequence GSA.

It belongs to the PanD family. As to quaternary structure, heterooctamer of four alpha and four beta subunits. Requires pyruvate as cofactor. Post-translationally, is synthesized initially as an inactive proenzyme, which is activated by self-cleavage at a specific serine bond to produce a beta-subunit with a hydroxyl group at its C-terminus and an alpha-subunit with a pyruvoyl group at its N-terminus.

The protein resides in the cytoplasm. The catalysed reaction is L-aspartate + H(+) = beta-alanine + CO2. Its pathway is cofactor biosynthesis; (R)-pantothenate biosynthesis; beta-alanine from L-aspartate: step 1/1. Its function is as follows. Catalyzes the pyruvoyl-dependent decarboxylation of aspartate to produce beta-alanine. The protein is Aspartate 1-decarboxylase of Burkholderia thailandensis (strain ATCC 700388 / DSM 13276 / CCUG 48851 / CIP 106301 / E264).